The sequence spans 411 residues: Multifunctional CCA protein (411 aa).

Residues Gly-8 and Arg-11 each contribute to the ATP site. The CTP site is built by Gly-8 and Arg-11. Mg(2+) is bound by residues Asp-21 and Asp-23. The ATP site is built by Arg-91, Arg-137, and Arg-140. CTP is bound by residues Arg-91, Arg-137, and Arg-140. In terms of domain architecture, HD spans 228-329 (CGIHTLMVAK…VNILDQIDSW (102 aa)).

It belongs to the tRNA nucleotidyltransferase/poly(A) polymerase family. Bacterial CCA-adding enzyme type 1 subfamily. In terms of assembly, monomer. Can also form homodimers and oligomers. The cofactor is Mg(2+). Ni(2+) is required as a cofactor.

It catalyses the reaction a tRNA precursor + 2 CTP + ATP = a tRNA with a 3' CCA end + 3 diphosphate. The catalysed reaction is a tRNA with a 3' CCA end + 2 CTP + ATP = a tRNA with a 3' CCACCA end + 3 diphosphate. Catalyzes the addition and repair of the essential 3'-terminal CCA sequence in tRNAs without using a nucleic acid template. Adds these three nucleotides in the order of C, C, and A to the tRNA nucleotide-73, using CTP and ATP as substrates and producing inorganic pyrophosphate. tRNA 3'-terminal CCA addition is required both for tRNA processing and repair. Also involved in tRNA surveillance by mediating tandem CCA addition to generate a CCACCA at the 3' terminus of unstable tRNAs. While stable tRNAs receive only 3'-terminal CCA, unstable tRNAs are marked with CCACCA and rapidly degraded. The polypeptide is Multifunctional CCA protein (Photobacterium profundum (strain SS9)).